Here is a 174-residue protein sequence, read N- to C-terminus: Austinoid biosynthesis clusters protein H (174 aa).

The protein belongs to the trt14 isomerase family. In terms of assembly, homodimer.

Its pathway is secondary metabolite biosynthesis; terpenoid biosynthesis. Its function is as follows. Part of the gene cluster B that mediates the biosynthesis of austinol and dehydroaustinol, two fungal meroterpenoids. The first step of the pathway is the synthesis of 3,5-dimethylorsellinic acid by the polyketide synthase ausA. 3,5-dimethylorsellinic acid is then prenylated by the polyprenyl transferase ausN. Further epoxidation by the FAD-dependent monooxygenase ausM and cyclization by the probable terpene cyclase ausL lead to the formation of protoaustinoid A. Protoaustinoid A is then oxidized to spiro-lactone preaustinoid A3 by the combined action of the FAD-binding monooxygenases ausB and ausC, and the dioxygenase ausE. Acid-catalyzed keto-rearrangement and ring contraction of the tetraketide portion of preaustinoid A3 by ausJ lead to the formation of preaustinoid A4. The aldo-keto reductase ausK, with the help of ausH, is involved in the next step by transforming preaustinoid A4 into isoaustinone which is in turn hydroxylated by the P450 monooxygenase ausI to form austinolide. Finally, the cytochrome P450 monooxygenase ausG modifies austinolide to austinol. Austinol can be further modified to dehydroaustinol which forms a diffusible complex with diorcinol that initiates conidiation. Due to genetic rearrangements of the clusters and the subsequent loss of some enzymes, the end products of the Emericella nidulans austinoid biosynthesis clusters are austinol and dehydroaustinol, even if additional enzymes, such as the O-acetyltransferase ausQ and the cytochrome P450 monooxygenase ausR are still functional. The polypeptide is Austinoid biosynthesis clusters protein H (Emericella nidulans (strain FGSC A4 / ATCC 38163 / CBS 112.46 / NRRL 194 / M139) (Aspergillus nidulans)).